The chain runs to 261 residues: MASPDWGYDDKNGPEQWSKLYPIANGNNQSPVDIKTSETKHDTSLKPISVSYNPATAKEIINVGHSFHVNFEDNDNRSVLKGGPFSDSYRLFQFHFHWGSTNEHGSEHTVDGVKYSAELHVAHWNSAKYSSLAEAASKADGLAVIGVLMKVGEANPKLQKVLDALQAIKTKGKRAPFTNFDPSTLLPSSLDFWTYPGSLTHPPLYESVTWIICKESISVSSEQLAQFRSLLSNVEGDNAVPMQHNNRPTQPLKGRTVRASF.

The tract at residues 1-31 (MASPDWGYDDKNGPEQWSKLYPIANGNNQSP) is disordered. A2 carries the post-translational modification N-acetylalanine. Residues 4–261 (PDWGYDDKNG…LKGRTVRASF (258 aa)) enclose the Alpha-carbonic anhydrase domain. H65 (proton donor/acceptor) is an active-site residue. Zn(2+) contacts are provided by H65, H68, H95, H97, and H120. Residues T200 and 200–201 (TH) contribute to the substrate site. H201 contributes to the Zn(2+) binding site. The disordered stretch occupies residues 241-261 (PMQHNNRPTQPLKGRTVRASF).

Belongs to the alpha-carbonic anhydrase family. The cofactor is Zn(2+).

The protein localises to the cytoplasm. It carries out the reaction hydrogencarbonate + H(+) = CO2 + H2O. It catalyses the reaction urea = cyanamide + H2O. Its activity is regulated as follows. Activated by histamine, imidazole, L-adrenaline, L- and D-histidine, and L- and D-phenylalanine. Inhibited by coumarins, sulfonamide derivatives such as acetazolamide, benzenesulfonamide and derivatives (4-carboxyethylbenzene-sulfonamide, 4-carboxyethylbenzene-sulfonamide ethyl ester, 4-(acetyl-2-aminoethyl)benzene-sulfonamide, 4-aminoethylbenzene-sulfonamide), and 'prong inhibitors' BR15, BR17, BR22 and BR30. Activated by a short exposition to Foscarnet (phosphonoformate trisodium salt), but inhibited by a long one. Esterase activity weakly reduced by cyanamide. Its function is as follows. Catalyzes the reversible hydration of carbon dioxide. Can hydrate cyanamide to urea. This Homo sapiens (Human) protein is Carbonic anhydrase 1 (CA1).